Here is a 596-residue protein sequence, read N- to C-terminus: Transcription factor IIIB 70 kDa subunit (596 aa).

Residues 1–33 (MPVCKNCHGTEFERDLSNANNDLVCKACGVVSE) form a TFIIB-type zinc finger. Zn(2+)-binding residues include Cys4, Cys7, Cys25, and Cys28. A run of 2 repeats spans residues 90–166 (VSYA…KMVK) and 185–264 (FAEK…EFKN). 2 disordered regions span residues 363-421 (GENI…NESG) and 509-534 (IATGNTSVKKKRTRRRNNTRSDEPTK). Basic and acidic residues predominate over residues 365–375 (NIYHEGSENET). A phosphoserine mark is found at Ser381 and Ser384. Over residues 388–421 (EHVEGEDKETEGTEEKVKKVKTKTSEEKKENESG) the composition is skewed to basic and acidic residues. Basic residues predominate over residues 516–526 (VKKKRTRRRNN).

It belongs to the TFIIB family. In terms of assembly, TFIIIB comprises the TATA-binding protein (TBP), the B-related factor (BRF) and the B' component (TFC5).

It localises to the nucleus. Its function is as follows. General activator of RNA polymerase III transcription. Interacts with TBP. Binds to Pol III subunit C34 and to the TAU135 component of TFIIIC. The chain is Transcription factor IIIB 70 kDa subunit (BRF1) from Saccharomyces cerevisiae (strain ATCC 204508 / S288c) (Baker's yeast).